The sequence spans 429 residues: Tryptophan synthase beta chain 2 (429 aa).

K111 carries the N6-(pyridoxal phosphate)lysine modification.

This sequence belongs to the TrpB family. Tetramer of two alpha and two beta chains. Pyridoxal 5'-phosphate is required as a cofactor.

The catalysed reaction is (1S,2R)-1-C-(indol-3-yl)glycerol 3-phosphate + L-serine = D-glyceraldehyde 3-phosphate + L-tryptophan + H2O. Its pathway is amino-acid biosynthesis; L-tryptophan biosynthesis; L-tryptophan from chorismate: step 5/5. Functionally, the beta subunit is responsible for the synthesis of L-tryptophan from indole and L-serine. This is Tryptophan synthase beta chain 2 (trpB2) from Saccharolobus solfataricus (strain ATCC 35092 / DSM 1617 / JCM 11322 / P2) (Sulfolobus solfataricus).